The sequence spans 504 residues: ATP-dependent RNA helicase DBP5 (504 aa).

Composition is skewed to basic and acidic residues over residues 1 to 10 (MSATEDKKDP), 17 to 32 (LKLD…ETKT), and 41 to 85 (KTTE…ENKD). The disordered stretch occupies residues 1-85 (MSATEDKKDP…DAKDERENKD (85 aa)). The short motif at 114–142 (KSFDELGLSPELLKGIYAMKFQKPSKIQE) is the Q motif element. The Helicase ATP-binding domain maps to 147-314 (LLLSNPPRNM…QKVIPNANTL (168 aa)). 160–167 (SQSGTGKT) provides a ligand contact to ATP. The DEAD box signature appears at 261–264 (DEAD). The Helicase C-terminal domain maps to 325-502 (AIKQLYMDCN…EVEDIVKKVL (178 aa)).

The protein belongs to the DEAD box helicase family. DDX19/DBP5 subfamily. As to quaternary structure, associates with the nuclear pore complex.

The protein resides in the cytoplasm. Its subcellular location is the nucleus. It localises to the nuclear pore complex. The protein localises to the nucleus membrane. It carries out the reaction ATP + H2O = ADP + phosphate + H(+). Functionally, ATP-dependent RNA helicase associated with the nuclear pore complex and essential for mRNA export from the nucleus. May participate in a terminal step of mRNA export through the removal of proteins that accompany mRNA through the nucleopore complex. May also be involved in early transcription. The protein is ATP-dependent RNA helicase DBP5 (DBP5) of Candida glabrata (strain ATCC 2001 / BCRC 20586 / JCM 3761 / NBRC 0622 / NRRL Y-65 / CBS 138) (Yeast).